Reading from the N-terminus, the 294-residue chain is Acetylglutamate kinase (294 aa).

Residues G69–G70, R91, and N190 each bind substrate.

Belongs to the acetylglutamate kinase family. ArgB subfamily.

It is found in the cytoplasm. The catalysed reaction is N-acetyl-L-glutamate + ATP = N-acetyl-L-glutamyl 5-phosphate + ADP. Its pathway is amino-acid biosynthesis; L-arginine biosynthesis; N(2)-acetyl-L-ornithine from L-glutamate: step 2/4. Catalyzes the ATP-dependent phosphorylation of N-acetyl-L-glutamate. This is Acetylglutamate kinase from Mycobacterium bovis (strain ATCC BAA-935 / AF2122/97).